A 332-amino-acid chain; its full sequence is D-lactate dehydrogenase (332 aa).

NAD(+)-binding positions include 155–156 (RI), D175, 206–207 (VP), N212, and 233–235 (FAR). Residues R235 and E264 contribute to the active site. Residue H296 is the Proton donor of the active site.

Belongs to the D-isomer specific 2-hydroxyacid dehydrogenase family. As to quaternary structure, homodimer.

It carries out the reaction (R)-lactate + NAD(+) = pyruvate + NADH + H(+). This is D-lactate dehydrogenase from Lactiplantibacillus pentosus (Lactobacillus pentosus).